Here is a 320-residue protein sequence, read N- to C-terminus: 3-oxoacyl-[acyl-carrier-protein] reductase 1, chloroplastic (320 aa).

A chloroplast-targeting transit peptide spans Met1–Gln60. Residue Val82–Val106 participates in NADP(+) binding. Ser214 is a binding site for substrate. Tyr227 serves as the catalytic Proton acceptor.

It belongs to the short-chain dehydrogenases/reductases (SDR) family. As to quaternary structure, homotetramer.

Its subcellular location is the plastid. It is found in the chloroplast. The catalysed reaction is a (3R)-hydroxyacyl-[ACP] + NADP(+) = a 3-oxoacyl-[ACP] + NADPH + H(+). It functions in the pathway lipid metabolism; fatty acid biosynthesis. The chain is 3-oxoacyl-[acyl-carrier-protein] reductase 1, chloroplastic (gbkr1) from Brassica napus (Rape).